A 195-amino-acid chain; its full sequence is Peptidyl-tRNA hydrolase (195 aa).

Position 18 (Y18) interacts with tRNA. The active-site Proton acceptor is H23. TRNA contacts are provided by Y69, N71, and N117.

The protein belongs to the PTH family. In terms of assembly, monomer.

The protein resides in the cytoplasm. It catalyses the reaction an N-acyl-L-alpha-aminoacyl-tRNA + H2O = an N-acyl-L-amino acid + a tRNA + H(+). Hydrolyzes ribosome-free peptidyl-tRNAs (with 1 or more amino acids incorporated), which drop off the ribosome during protein synthesis, or as a result of ribosome stalling. In terms of biological role, catalyzes the release of premature peptidyl moieties from peptidyl-tRNA molecules trapped in stalled 50S ribosomal subunits, and thus maintains levels of free tRNAs and 50S ribosomes. The sequence is that of Peptidyl-tRNA hydrolase from Nitrosomonas eutropha (strain DSM 101675 / C91 / Nm57).